Here is a 126-residue protein sequence, read N- to C-terminus: MAVAKKRKVKKNIPEGIVYIYSTFNNTIVTISDKQGNVVSWCSAGVLGFKGSRKSTPFAAQNALADAAKKAADCGMRKVEVKVKGPGPGREAALRALVSTGFEVSRIYDVTPVPHNGCKPPKRRRV.

The protein belongs to the universal ribosomal protein uS11 family. Part of the 30S ribosomal subunit. Interacts with proteins S7 and S18. Binds to IF-3.

Located on the platform of the 30S subunit, it bridges several disparate RNA helices of the 16S rRNA. Forms part of the Shine-Dalgarno cleft in the 70S ribosome. The protein is Small ribosomal subunit protein uS11 of Desulfotalea psychrophila (strain LSv54 / DSM 12343).